A 333-amino-acid polypeptide reads, in one-letter code: 4-hydroxy-3-methylbut-2-enyl diphosphate reductase (333 aa).

Cysteine 20 provides a ligand contact to [4Fe-4S] cluster. (2E)-4-hydroxy-3-methylbut-2-enyl diphosphate contacts are provided by histidine 49 and histidine 82. Residues histidine 49 and histidine 82 each contribute to the dimethylallyl diphosphate site. Isopentenyl diphosphate is bound by residues histidine 49 and histidine 82. Cysteine 104 contributes to the [4Fe-4S] cluster binding site. (2E)-4-hydroxy-3-methylbut-2-enyl diphosphate is bound at residue histidine 132. Dimethylallyl diphosphate is bound at residue histidine 132. Residue histidine 132 participates in isopentenyl diphosphate binding. The active-site Proton donor is glutamate 134. Threonine 172 serves as a coordination point for (2E)-4-hydroxy-3-methylbut-2-enyl diphosphate. Cysteine 202 serves as a coordination point for [4Fe-4S] cluster. 4 residues coordinate (2E)-4-hydroxy-3-methylbut-2-enyl diphosphate: serine 230, serine 231, asparagine 232, and serine 274. Positions 230, 231, 232, and 274 each coordinate dimethylallyl diphosphate. Isopentenyl diphosphate is bound by residues serine 230, serine 231, asparagine 232, and serine 274.

It belongs to the IspH family. The cofactor is [4Fe-4S] cluster.

It catalyses the reaction isopentenyl diphosphate + 2 oxidized [2Fe-2S]-[ferredoxin] + H2O = (2E)-4-hydroxy-3-methylbut-2-enyl diphosphate + 2 reduced [2Fe-2S]-[ferredoxin] + 2 H(+). It carries out the reaction dimethylallyl diphosphate + 2 oxidized [2Fe-2S]-[ferredoxin] + H2O = (2E)-4-hydroxy-3-methylbut-2-enyl diphosphate + 2 reduced [2Fe-2S]-[ferredoxin] + 2 H(+). It participates in isoprenoid biosynthesis; dimethylallyl diphosphate biosynthesis; dimethylallyl diphosphate from (2E)-4-hydroxy-3-methylbutenyl diphosphate: step 1/1. It functions in the pathway isoprenoid biosynthesis; isopentenyl diphosphate biosynthesis via DXP pathway; isopentenyl diphosphate from 1-deoxy-D-xylulose 5-phosphate: step 6/6. Its function is as follows. Catalyzes the conversion of 1-hydroxy-2-methyl-2-(E)-butenyl 4-diphosphate (HMBPP) into a mixture of isopentenyl diphosphate (IPP) and dimethylallyl diphosphate (DMAPP). Acts in the terminal step of the DOXP/MEP pathway for isoprenoid precursor biosynthesis. This Polaromonas sp. (strain JS666 / ATCC BAA-500) protein is 4-hydroxy-3-methylbut-2-enyl diphosphate reductase.